A 67-amino-acid polypeptide reads, in one-letter code: Large ribosomal subunit protein bL35 (67 aa).

Belongs to the bacterial ribosomal protein bL35 family.

The sequence is that of Large ribosomal subunit protein bL35 from Dehalococcoides mccartyi (strain ATCC BAA-2100 / JCM 16839 / KCTC 5957 / BAV1).